A 116-amino-acid chain; its full sequence is MQTRYGRRALTIWPLLLLAIAAEVAATSLLPQTNGFRKLKPTVAVACLYTVAFALLAQILKFTDIGIAYALWAGLGTASVAVIGVLFRNERFSWKHAIGLALVVTGVVTLNLQAGQ.

Transmembrane regions (helical) follow at residues 10–30 (LTIW…TSLL), 42–62 (TVAV…ILKF), 67–87 (IAYA…GVLF), and 92–112 (FSWK…TLNL).

This sequence belongs to the drug/metabolite transporter (DMT) superfamily. Small multidrug resistance (SMR) (TC 2.A.7.1) family. NepA/NepB subfamily. The efflux pump is composed of NepA and NepB.

Its subcellular location is the cell membrane. In terms of biological role, component of an efflux pump responsible for the transport of nicotine breakdown products, in particular methylamine, out of the cell. This pump apparently serves as a metabolic valve for nicotine catabolites and may protect the bacteria from the potentially toxic side effects of these compounds. The chain is Nicotine metabolites export pump subunit NepA (nepA) from Paenarthrobacter nicotinovorans (Arthrobacter nicotinovorans).